The chain runs to 210 residues: Fibrillarin-like rRNA/tRNA 2'-O-methyltransferase (210 aa).

The segment at 1-34 (MTLPSGVERHDFGGETSLATQGQPVYGERTDGDW) is disordered. Residues 71–72 (TT), 87–88 (EF), 112–113 (DA), and 132–135 (DVAT) contribute to the S-adenosyl-L-methionine site.

The protein belongs to the methyltransferase superfamily. Fibrillarin family. In terms of assembly, interacts with nop5. Component of box C/D small ribonucleoprotein (sRNP) particles that contain rpl7ae, FlpA and nop5, plus a guide RNA.

In terms of biological role, involved in pre-rRNA and tRNA processing. Utilizes the methyl donor S-adenosyl-L-methionine to catalyze the site-specific 2'-hydroxyl methylation of ribose moieties in rRNA and tRNA. Site specificity is provided by a guide RNA that base pairs with the substrate. Methylation occurs at a characteristic distance from the sequence involved in base pairing with the guide RNA. This chain is Fibrillarin-like rRNA/tRNA 2'-O-methyltransferase, found in Haloarcula marismortui (strain ATCC 43049 / DSM 3752 / JCM 8966 / VKM B-1809) (Halobacterium marismortui).